Here is a 1112-residue protein sequence, read N- to C-terminus: Glutamate receptor-interacting protein 1 (1112 aa).

Position 43 is a phosphoserine (Ser-43). 6 PDZ domains span residues 53–136 (VVEL…EYEL), 150–238 (TVEV…EYDV), 252–336 (LVEV…LPHH), 471–560 (EVVL…EFDV), 572–657 (HVKL…RKDE), and 672–754 (TVEL…KKQT). 3 disordered regions span residues 752–796 (KQTD…VYPS), 841–886 (KRAS…AEQE), and 922–963 (NHEA…DVGR). The segment covering 869 to 880 (STASGFAGASDS) has biased composition (low complexity). Polar residues predominate over residues 928–958 (ARSQLGRQASFQERSNSRPHYSQTTRSNTLP). Residues 988–1070 (KVTLYKDSGM…KLDLVISRNP (83 aa)) enclose the PDZ 7 domain. A disordered region spans residues 1077–1112 (IEQPALPSDWSEQNSAFFQQPSHGGNLETREPTNTL). Residues 1086–1099 (WSEQNSAFFQQPSH) are compositionally biased toward polar residues.

Interacts with EFNB1, EPHA7, EPHB2, EFNB3, KIF5A, KIF5C, KIF5B and the C-terminal tail of PRLHR. Forms a ternary complex with GRIA2 and CSPG4. Can form homomultimers or heteromultimers with GRIP2. Interacts with GRIA2, GRIA3, GRIPAP1/GRASP1, PPFIA1, PPFIA4, FRAS1, PLCD4, PTPRF and liprins-alpha. Interacts with ATAD1 in an ATP-dependent manner. ATAD1-catalyzed ATP hydrolysis disrupts binding to ATAD1 and to GRIA2 and leads to AMPAR complex disassembly. Interacts with SLC30A9. Interacts with BUD23. Forms a complex with NSG1, GRIA2 and STX12; controls the intracellular fate of AMPAR and the endosomal sorting of the GRIA2 subunit toward recycling and membrane targeting. Interacts with NSG1. Expressed in brain, testis and retina. In brain highly expressed in the olfactory bulb, cortex and hippocampus and lower level in thalamus, cerebellum and spinal cord. In brain it is found in the perikaryon, dendrites, dendritic shafts, dendritic spines and, excitatory and inhibitory synapses of neurons. In retina, it is most abundant in the plexiform layers than in perikarya.

It is found in the cytoplasmic vesicle. Its subcellular location is the perikaryon. The protein resides in the cell projection. It localises to the dendrite. The protein localises to the cytoplasm. It is found in the endomembrane system. Its subcellular location is the postsynaptic cell membrane. The protein resides in the postsynaptic density. It localises to the endoplasmic reticulum membrane. Functionally, may play a role as a localized scaffold for the assembly of a multiprotein signaling complex and as mediator of the trafficking of its binding partners at specific subcellular location in neurons. Through complex formation with NSG1, GRIA2 and STX12 controls the intracellular fate of AMPAR and the endosomal sorting of the GRIA2 subunit toward recycling and membrane targeting. This is Glutamate receptor-interacting protein 1 (Grip1) from Rattus norvegicus (Rat).